We begin with the raw amino-acid sequence, 159 residues long: MINEYGYRPNVGIVIGNFNGQVLWARRYKQNAWQFPQGGINSGETAEQAMFRELFEEVGLRPKDVRILTTTRYWLKYKIPHQFIRWDAKPICIGQKQKWFLLQLVCKDTRINIQCGKKPEFDSWKWVSFWYPLSQVVFFKRNVYRRMMKEFSRAIMLPE.

The region spanning 6–149 is the Nudix hydrolase domain; it reads GYRPNVGIVI…KRNVYRRMMK (144 aa). The Nudix box signature appears at 38 to 59; it reads GGINSGETAEQAMFRELFEEVG.

Belongs to the Nudix hydrolase family. RppH subfamily. The cofactor is a divalent metal cation.

Functionally, accelerates the degradation of transcripts by removing pyrophosphate from the 5'-end of triphosphorylated RNA, leading to a more labile monophosphorylated state that can stimulate subsequent ribonuclease cleavage. This is RNA pyrophosphohydrolase from Baumannia cicadellinicola subsp. Homalodisca coagulata.